The primary structure comprises 239 residues: 1-(5-phosphoribosyl)-5-[(5-phosphoribosylamino)methylideneamino] imidazole-4-carboxamide isomerase (239 aa).

D8 serves as the catalytic Proton acceptor. Residue D129 is the Proton donor of the active site.

The protein belongs to the HisA/HisF family.

The protein resides in the cytoplasm. The catalysed reaction is 1-(5-phospho-beta-D-ribosyl)-5-[(5-phospho-beta-D-ribosylamino)methylideneamino]imidazole-4-carboxamide = 5-[(5-phospho-1-deoxy-D-ribulos-1-ylimino)methylamino]-1-(5-phospho-beta-D-ribosyl)imidazole-4-carboxamide. It functions in the pathway amino-acid biosynthesis; L-histidine biosynthesis; L-histidine from 5-phospho-alpha-D-ribose 1-diphosphate: step 4/9. The sequence is that of 1-(5-phosphoribosyl)-5-[(5-phosphoribosylamino)methylideneamino] imidazole-4-carboxamide isomerase from Legionella pneumophila (strain Lens).